The following is a 547-amino-acid chain: Chaperonin GroEL (547 aa).

Residues 30-33 (TLGP), lysine 51, 87-91 (DGTTT), glycine 415, and aspartate 495 each bind ATP.

The protein belongs to the chaperonin (HSP60) family. Forms a cylinder of 14 subunits composed of two heptameric rings stacked back-to-back. Interacts with the co-chaperonin GroES.

It localises to the cytoplasm. The catalysed reaction is ATP + H2O + a folded polypeptide = ADP + phosphate + an unfolded polypeptide.. Its function is as follows. Together with its co-chaperonin GroES, plays an essential role in assisting protein folding. The GroEL-GroES system forms a nano-cage that allows encapsulation of the non-native substrate proteins and provides a physical environment optimized to promote and accelerate protein folding. This is Chaperonin GroEL from Ralstonia nicotianae (strain ATCC BAA-1114 / GMI1000) (Ralstonia solanacearum).